The chain runs to 365 residues: Protein YIM1 (365 aa).

This sequence belongs to the YIM1 family.

It localises to the lipid droplet. The protein resides in the mitochondrion. The polypeptide is Protein YIM1 (YIM1) (Saccharomyces cerevisiae (strain RM11-1a) (Baker's yeast)).